Consider the following 342-residue polypeptide: Periplasmic protein TorT (342 aa).

The signal sequence occupies residues 1-18 (MRVLLFLLLSLFMLPAFS).

It belongs to the bacterial solute-binding protein 2 family.

It is found in the periplasm. Its function is as follows. Upon binding a putative inducer it probably interacts with TorS and allows it to play a role in the induction of the torCAD operon for trimethylamine N-oxide reductase. This Escherichia coli (strain K12) protein is Periplasmic protein TorT (torT).